Here is a 253-residue protein sequence, read N- to C-terminus: MALSMPLNGLKEEDKEPLIELFVKAGSDGESIGNCPFSQRLFMILWLKGVVFSVTTVDLKRKPADLQNLAPGTHPPFITFNSEVKTDVNKIEEFLEEVLCPPKYLKLSPKHPESNTAGMDIFAKFSAYIKNSRPEANEALERGLLKTLQKLDEYLNSPLPDEIDENSMEDIKFSTRKFLDGNEMTLADCNLLPKLHIVKVVAKKYRNFDIPKEMTGIWRYLTNAYSRDEFTNTCPSDKEVEIAYSDVAKRLTK.

Ala2 carries the N-acetylalanine modification. The tract at residues 2–101 is required for insertion into the membrane; that stretch reads ALSMPLNGLK…EEFLEEVLCP (100 aa). Ser4 is modified (phosphoserine). N6-acetyllysine is present on Lys24. Residues 35 to 38 carry the G-site motif; it reads CPFS. Residues 37-57 traverse the membrane as a helical segment; that stretch reads FSQRLFMILWLKGVVFSVTTV. Residues 81–244 form the GST C-terminal domain; that stretch reads NSEVKTDVNK…PSDKEVEIAY (164 aa). N6-acetyllysine is present on Lys130. Residues Ser132, Ser167, and Ser236 each carry the phosphoserine modification. A Phosphotyrosine modification is found at Tyr244.

The protein belongs to the chloride channel CLIC family. In terms of assembly, component of a multimeric complex consisting of several cytoskeletal proteins, including actin, ezrin, alpha-actinin, gelsolin, IQGAP1 and CLIC5A. Binds directly to brain dynamin I in a complex containing actin, tubulin and 14-3-3 isoforms. Monomer. Interacts with HRH3. Interacts with AKAP9. In terms of tissue distribution, detected in epithelial cells from colon, esophagus and kidney (at protein level). Expression is prominent in heart, kidney, placenta and skeletal muscle.

The protein localises to the cytoplasm. Its subcellular location is the cytoskeleton. It is found in the microtubule organizing center. It localises to the centrosome. The protein resides in the cytoplasmic vesicle membrane. The protein localises to the nucleus. Its subcellular location is the cell membrane. It is found in the mitochondrion. It localises to the cell junction. The protein resides in the endoplasmic reticulum membrane. It catalyses the reaction chloride(in) = chloride(out). The catalysed reaction is thiocyanate(in) = thiocyanate(out). The enzyme catalyses nitrate(in) = nitrate(out). It carries out the reaction iodide(out) = iodide(in). It catalyses the reaction bromide(in) = bromide(out). The catalysed reaction is fluoride(in) = fluoride(out). The enzyme catalyses choline(out) = choline(in). With respect to regulation, inhibited by rapamycin, amphotericin B and IAA-94. In terms of biological role, in the soluble state, catalyzes glutaredoxin-like thiol disulfide exchange reactions with reduced glutathione as electron donor. Can insert into membranes and form voltage-dependent multi-ion conductive channels. Membrane insertion seems to be redox-regulated and may occur only under oxidizing conditions. Has alternate cellular functions like a potential role in angiogenesis or in maintaining apical-basolateral membrane polarity during mitosis and cytokinesis. Could also promote endothelial cell proliferation and regulate endothelial morphogenesis (tubulogenesis). Promotes cell-surface expression of HRH3. This Homo sapiens (Human) protein is Chloride intracellular channel protein 4.